Here is a 62-residue protein sequence, read N- to C-terminus: 6.7 kDa chloroplast outer envelope membrane protein (62 aa).

The Chloroplast intermembrane portion of the chain corresponds to 1-17 (MESVAKPATTKEGSAKQ). A helical membrane pass occupies residues 18 to 40 (AAIVVGVLALGWFAIQVAFIPLF). The Cytoplasmic portion of the chain corresponds to 41-62 (NKVRGGGSDKKDDDVNAFTPDT).

It localises to the plastid. The protein resides in the chloroplast outer membrane. In Spinacia oleracea (Spinach), this protein is 6.7 kDa chloroplast outer envelope membrane protein.